Reading from the N-terminus, the 229-residue chain is Large ribosomal subunit protein uL1 (229 aa).

Belongs to the universal ribosomal protein uL1 family. As to quaternary structure, part of the 50S ribosomal subunit.

In terms of biological role, binds directly to 23S rRNA. The L1 stalk is quite mobile in the ribosome, and is involved in E site tRNA release. Functionally, protein L1 is also a translational repressor protein, it controls the translation of the L11 operon by binding to its mRNA. This chain is Large ribosomal subunit protein uL1, found in Clostridium botulinum (strain Alaska E43 / Type E3).